A 1043-amino-acid chain; its full sequence is MELQKGKGAAAAAAASGAAGGGGGGAGAGAPGGGRLLLSTSLDAKDELEERLERCMSIVTSMTAGVSEREANDALNAYVCKGLPQHEEICLGLFTLILTEPAQAQKCYRDLALVSRDGMNIVLNKINQILMEKYLKLQDTCRTQLVWLVRELVKSGVLGADGVCMTFMKQIAGGGDVTAKNIWLAESVLDILTEQREWVLKSSILIAMAVYTYLRLIVDHHGTAQLQALRQKEVDFCISLLRERFMECLMIGRDLVRLLQNVARIPEFELLWKDIIHNPQALSPQFTGILQLLQSRTSRKFLACRLTPDMETKLLFMTSRVRFGQQKRYQDWFQRQYLSTPDSQSLRCDLIRYICGVVHPSNEVLSSDILPRWAIIGWLLTTCTSNVAASNAKLALFYDWLFFSPDKDSIMNIEPAILVMHHSMKPHPAITATLLDFMCRIIPNFYPPLEGHVRQGVFSSLNHIVEKRVLAHLAPLFDNPKLDKELRAMLREKFPEFCSSPSPPVEVKIEEPVSMEMDNHMSDKDESCYDNAEAAFSDDEEDLNSKGKKREFRFHPIKETVVEEPVDITPYLDQLDESLRDKVLQLQKGSDTEAQCEVMQEIVDQVLEEDFDSEQLSVLASCLQELFKAHFRGEVLPEEITEESLEESVGKPLYLIFRNLCQMQEDNSSFSLLLDLLSELYQKQPKIGYHLLYYLRASKAAAGKMNLYESFAQATQLGDLHTCLMMDMKACQEDDVRLLCHLTPSIYTEFPDETLRSGELLNMIVAVIDSAQLQELVCHVMMGNLVMFRKDSVLNILIQSLDWETFEQYCAWQLFLAHNIPLETIIPILQHLKYKEHPEALSCLLLQLRREKPSEEMVKMVLSRPCHPDDQFTTSILRHWCMKHDELLAEHIKSLLIKNNSLPRKRQSLRSSSSKLAQLTLEQILEHLDNLRLNLTNTKQNFFSQTPILQALQHVQASCDEAHKMKFSDLFSLAEEYEDSSTKPPKSRRKAALSSPRSRKNATQPPNAEEESGSSSASEEEDTKPKPTKRKRKGSSAVGSDSD.

At methionine 1 the chain carries N-acetylmethionine. Phosphoserine is present on residues serine 502, serine 537, and serine 995. The disordered stretch occupies residues 977–1043 (YEDSSTKPPK…GSSAVGSDSD (67 aa)). Positions 1008 to 1022 (AEEESGSSSASEEED) are enriched in acidic residues.

The protein belongs to the Integrator subunit 3 family. Component of the Integrator complex, composed of core subunits INTS1, INTS2, INTS3, INTS4, INTS5, INTS6, INTS7, INTS8, INTS9/RC74, INTS10, INTS11/CPSF3L, INTS12, INTS13, INTS14 and INTS15. The core complex associates with protein phosphatase 2A subunits PPP2CA and PPP2R1A, to form the Integrator-PP2A (INTAC) complex. Component of the SOSS complex, composed of SOSS-B (SOSS-B1/NABP2 or SOSS-B2/NABP1), SOSS-A/INTS3 and SOSS-C/INIP. SOSS complexes containing SOSS-B1/NABP2 are more abundant than complexes containing SOSS-B2/NABP1. Interacts with SOSS-B1/NABP2, SOSS-B2/NABP1 and SOSS-C/INIP; the interaction is direct. Interacts with NBN/NBS1.

Its subcellular location is the nucleus. The protein localises to the cytoplasm. In terms of biological role, component of the integrator complex, a multiprotein complex that terminates RNA polymerase II (Pol II) transcription in the promoter-proximal region of genes. The integrator complex provides a quality checkpoint during transcription elongation by driving premature transcription termination of transcripts that are unfavorably configured for transcriptional elongation: the complex terminates transcription by (1) catalyzing dephosphorylation of the C-terminal domain (CTD) of Pol II subunit POLR2A/RPB1 and SUPT5H/SPT5, (2) degrading the exiting nascent RNA transcript via endonuclease activity and (3) promoting the release of Pol II from bound DNA. The integrator complex is also involved in terminating the synthesis of non-coding Pol II transcripts, such as enhancer RNAs (eRNAs), small nuclear RNAs (snRNAs), telomerase RNAs and long non-coding RNAs (lncRNAs). Within the integrator complex, INTS3 is involved in the post-termination step: INTS3 binds INTS7 in the open conformation of integrator complex and prevents the rebinding of Pol II to the integrator after termination cycle. Mediates recruitment of cytoplasmic dynein to the nuclear envelope, probably as component of the integrator complex. Component of the SOSS complex, a multiprotein complex that functions downstream of the MRN complex to promote DNA repair and G2/M checkpoint. The SOSS complex associates with single-stranded DNA at DNA lesions and influences diverse endpoints in the cellular DNA damage response including cell-cycle checkpoint activation, recombinational repair and maintenance of genomic stability. The SOSS complex is required for efficient homologous recombination-dependent repair of double-strand breaks (DSBs) and ATM-dependent signaling pathways. In the SOSS complex, it is required for the assembly of the complex and for stabilization of the complex at DNA damage sites. This chain is Integrator complex subunit 3, found in Homo sapiens (Human).